The primary structure comprises 422 residues: Serine--tRNA ligase (422 aa).

L-serine is bound at residue 230 to 232 (TAE). 261-263 (RAE) contributes to the ATP binding site. Residue Glu-284 coordinates L-serine. Residue 348 to 351 (EISS) participates in ATP binding. Ser-383 contributes to the L-serine binding site.

The protein belongs to the class-II aminoacyl-tRNA synthetase family. Type-1 seryl-tRNA synthetase subfamily. As to quaternary structure, homodimer. The tRNA molecule binds across the dimer.

The protein localises to the cytoplasm. It carries out the reaction tRNA(Ser) + L-serine + ATP = L-seryl-tRNA(Ser) + AMP + diphosphate + H(+). The enzyme catalyses tRNA(Sec) + L-serine + ATP = L-seryl-tRNA(Sec) + AMP + diphosphate + H(+). Its pathway is aminoacyl-tRNA biosynthesis; selenocysteinyl-tRNA(Sec) biosynthesis; L-seryl-tRNA(Sec) from L-serine and tRNA(Sec): step 1/1. In terms of biological role, catalyzes the attachment of serine to tRNA(Ser). Is also able to aminoacylate tRNA(Sec) with serine, to form the misacylated tRNA L-seryl-tRNA(Sec), which will be further converted into selenocysteinyl-tRNA(Sec). The polypeptide is Serine--tRNA ligase (Pelotomaculum thermopropionicum (strain DSM 13744 / JCM 10971 / SI)).